A 284-amino-acid polypeptide reads, in one-letter code: Diaminopimelate epimerase (284 aa).

Residues N21, Q54, and N74 each coordinate substrate. The active-site Proton donor is the C83. Residues 84 to 85 (GN), N167, N200, and 218 to 219 (ER) contribute to the substrate site. C227 (proton acceptor) is an active-site residue. 228–229 (GS) lines the substrate pocket.

Belongs to the diaminopimelate epimerase family. As to quaternary structure, homodimer.

The protein localises to the cytoplasm. It carries out the reaction (2S,6S)-2,6-diaminopimelate = meso-2,6-diaminopimelate. It functions in the pathway amino-acid biosynthesis; L-lysine biosynthesis via DAP pathway; DL-2,6-diaminopimelate from LL-2,6-diaminopimelate: step 1/1. Functionally, catalyzes the stereoinversion of LL-2,6-diaminopimelate (L,L-DAP) to meso-diaminopimelate (meso-DAP), a precursor of L-lysine and an essential component of the bacterial peptidoglycan. The chain is Diaminopimelate epimerase from Buchnera aphidicola subsp. Acyrthosiphon pisum (strain 5A).